An 853-amino-acid chain; its full sequence is DNA mismatch repair protein MutS (853 aa).

614-621 (GPNMGGKS) contacts ATP.

The protein belongs to the DNA mismatch repair MutS family.

Its function is as follows. This protein is involved in the repair of mismatches in DNA. It is possible that it carries out the mismatch recognition step. This protein has a weak ATPase activity. In Escherichia coli O127:H6 (strain E2348/69 / EPEC), this protein is DNA mismatch repair protein MutS.